Here is a 202-residue protein sequence, read N- to C-terminus: Holliday junction resolvase RecU (202 aa).

Positions 85, 87, 100, and 119 each coordinate Mg(2+).

This sequence belongs to the RecU family. Mg(2+) is required as a cofactor.

The protein localises to the cytoplasm. The catalysed reaction is Endonucleolytic cleavage at a junction such as a reciprocal single-stranded crossover between two homologous DNA duplexes (Holliday junction).. Functionally, endonuclease that resolves Holliday junction intermediates in genetic recombination. Cleaves mobile four-strand junctions by introducing symmetrical nicks in paired strands. Promotes annealing of linear ssDNA with homologous dsDNA. Required for DNA repair, homologous recombination and chromosome segregation. This is Holliday junction resolvase RecU from Streptococcus pyogenes serotype M5 (strain Manfredo).